The sequence spans 622 residues: Chaperone protein HscA homolog (622 aa).

This sequence belongs to the heat shock protein 70 family.

Chaperone involved in the maturation of iron-sulfur cluster-containing proteins. Has a low intrinsic ATPase activity which is markedly stimulated by HscB. The chain is Chaperone protein HscA homolog from Burkholderia thailandensis (strain ATCC 700388 / DSM 13276 / CCUG 48851 / CIP 106301 / E264).